We begin with the raw amino-acid sequence, 298 residues long: Bifunctional protein FolD (298 aa).

NADP(+) is bound by residues 166–168 (GRS), Ser191, and Ile232.

Belongs to the tetrahydrofolate dehydrogenase/cyclohydrolase family. As to quaternary structure, homodimer.

The enzyme catalyses (6R)-5,10-methylene-5,6,7,8-tetrahydrofolate + NADP(+) = (6R)-5,10-methenyltetrahydrofolate + NADPH. It carries out the reaction (6R)-5,10-methenyltetrahydrofolate + H2O = (6R)-10-formyltetrahydrofolate + H(+). It functions in the pathway one-carbon metabolism; tetrahydrofolate interconversion. Its function is as follows. Catalyzes the oxidation of 5,10-methylenetetrahydrofolate to 5,10-methenyltetrahydrofolate and then the hydrolysis of 5,10-methenyltetrahydrofolate to 10-formyltetrahydrofolate. The sequence is that of Bifunctional protein FolD from Maricaulis maris (strain MCS10) (Caulobacter maris).